A 542-amino-acid polypeptide reads, in one-letter code: CTP synthase (542 aa).

The segment at 1-265 (MARYVFITGG…DDEVLAAFGI (265 aa)) is amidoligase domain. Serine 13 is a CTP binding site. Residue serine 13 participates in UTP binding. Residues 14–19 (SLGKGI) and aspartate 71 each bind ATP. 2 residues coordinate Mg(2+): aspartate 71 and glutamate 139. CTP is bound by residues 146–148 (DIE), 186–191 (KTKPTQ), and lysine 222. UTP-binding positions include 186–191 (KTKPTQ) and lysine 222. The 251-residue stretch at 291 to 541 (TIAIVGKYTG…IEAATEQSRL (251 aa)) folds into the Glutamine amidotransferase type-1 domain. Glycine 353 lines the L-glutamine pocket. Residue cysteine 380 is the Nucleophile; for glutamine hydrolysis of the active site. L-glutamine contacts are provided by residues 381-384 (FGMQ), glutamate 404, and arginine 469. Residues histidine 514 and glutamate 516 contribute to the active site.

Belongs to the CTP synthase family. In terms of assembly, homotetramer.

The catalysed reaction is UTP + L-glutamine + ATP + H2O = CTP + L-glutamate + ADP + phosphate + 2 H(+). The enzyme catalyses L-glutamine + H2O = L-glutamate + NH4(+). It carries out the reaction UTP + NH4(+) + ATP = CTP + ADP + phosphate + 2 H(+). It functions in the pathway pyrimidine metabolism; CTP biosynthesis via de novo pathway; CTP from UDP: step 2/2. Its activity is regulated as follows. Allosterically activated by GTP, when glutamine is the substrate; GTP has no effect on the reaction when ammonia is the substrate. The allosteric effector GTP functions by stabilizing the protein conformation that binds the tetrahedral intermediate(s) formed during glutamine hydrolysis. Inhibited by the product CTP, via allosteric rather than competitive inhibition. Catalyzes the ATP-dependent amination of UTP to CTP with either L-glutamine or ammonia as the source of nitrogen. Regulates intracellular CTP levels through interactions with the four ribonucleotide triphosphates. This Rhizobium johnstonii (strain DSM 114642 / LMG 32736 / 3841) (Rhizobium leguminosarum bv. viciae) protein is CTP synthase.